The primary structure comprises 328 residues: Ubiquitin carboxyl-terminal hydrolase isozyme L5 (328 aa).

The UCH catalytic domain maps to 7–225; sequence EWCLMESDPG…IRFNLMAIVS (219 aa). N6-succinyllysine is present on lysine 47. The active-site Nucleophile is cysteine 88. Residue lysine 158 is modified to N6-acetyllysine. Histidine 164 serves as the catalytic Proton donor. Lysine 288 carries the post-translational modification N6-succinyllysine. The ULD domain maps to 290–318; it reads NYLPFIMELLKTLAEHQQLIPLVEKAKEK. Residues 312–328 form an interaction with ADRM1 region; the sequence is VEKAKEKQNAKKAQETK.

Belongs to the peptidase C12 family. In terms of assembly, component of the 19S (PA700) regulatory complex of the 26S proteasome. Interacts with ADRM1 and NFRKB. Component of the INO80 complex; specifically part of a complex module associated with N-terminus of INO80.

It localises to the cytoplasm. The protein localises to the nucleus. It catalyses the reaction Thiol-dependent hydrolysis of ester, thioester, amide, peptide and isopeptide bonds formed by the C-terminal Gly of ubiquitin (a 76-residue protein attached to proteins as an intracellular targeting signal).. With respect to regulation, activated by ADRM1. Inhibited by interaction with NFRKB. In terms of biological role, protease that specifically cleaves 'Lys-48'-linked polyubiquitin chains. Deubiquitinating enzyme associated with the 19S regulatory subunit of the 26S proteasome. Putative regulatory component of the INO80 complex; however is inactive in the INO80 complex and is activated by a transient interaction of the INO80 complex with the proteasome via ADRM1. The polypeptide is Ubiquitin carboxyl-terminal hydrolase isozyme L5 (UCHL5) (Bos taurus (Bovine)).